The chain runs to 178 residues: Ribosome maturation factor RimM (178 aa).

The 80-residue stretch at 99–178 (EGDYYWHDLI…TIEVDWDAGF (80 aa)) folds into the PRC barrel domain.

It belongs to the RimM family. As to quaternary structure, binds ribosomal protein uS19.

Its subcellular location is the cytoplasm. In terms of biological role, an accessory protein needed during the final step in the assembly of 30S ribosomal subunit, possibly for assembly of the head region. Essential for efficient processing of 16S rRNA. May be needed both before and after RbfA during the maturation of 16S rRNA. It has affinity for free ribosomal 30S subunits but not for 70S ribosomes. The protein is Ribosome maturation factor RimM of Haemophilus influenzae (strain ATCC 51907 / DSM 11121 / KW20 / Rd).